A 449-amino-acid chain; its full sequence is uncharacterized protein (449 aa).

Residues 1–20 form the signal peptide; it reads MWTALVLIWIFSLSLSESHA. The Extracellular segment spans residues 21-400; it reads ASNDPRNFVP…PLTQAVVDKT (380 aa). N49 carries N-linked (GlcNAc...) asparagine glycosylation. 3 disordered regions span residues 72 to 101, 154 to 187, and 215 to 381; these read AHLN…AADG, MTAA…GHPS, and QTVA…PSTQ. 2 stretches are compositionally biased toward low complexity: residues 154–184 and 215–234; these read MTAA…TATG and QTVA…PSPS. Composition is skewed to polar residues over residues 255 to 279 and 352 to 367; these read GPIS…MPSN and TPGT…SSGG. The helical transmembrane segment at 401–421 threads the bilayer; the sequence is LLLVVLLLGVTLFITVLVLFA. The Cytoplasmic segment spans residues 422–449; that stretch reads LQAYESYKKKDYTQVDYLINGMYADSEM.

Highest expression in heart, placenta, liver, pancreas and colon. Also detected in brain, lung, skeletal muscle, kidney, spleen, prostate, testis, ovary and small intestine. Lowest expression in thymus and leukocytes.

It is found in the cell membrane. It localises to the golgi apparatus. The protein localises to the trans-Golgi network membrane. This is an uncharacterized protein from Homo sapiens (Human).